The following is a 94-amino-acid chain: DNA-binding protein HU (94 aa).

The protein belongs to the bacterial histone-like protein family. Homodimer.

In terms of biological role, histone-like DNA-binding protein which is capable of wrapping DNA to stabilize it, and thus to prevent its denaturation under extreme environmental conditions. In Helicobacter pylori (strain J99 / ATCC 700824) (Campylobacter pylori J99), this protein is DNA-binding protein HU (hup).